A 423-amino-acid polypeptide reads, in one-letter code: Hypoxia responsive morphology factor B (423 aa).

The short motif at 46 to 69 (KRSKTRRPKKEYKLQYENTKAHRV) is the Bipartite nuclear localization signal element. The RNA recognition motif (RRM)-like domain stretch occupies residues 157 to 187 (TQNCWAYRAAYLNAVHTIFSEQICSAMEVSP). The span at 243-257 (LSPQSGRGPEPSTQI) shows a compositional bias: polar residues. Residues 243–273 (LSPQSGRGPEPSTQIAEPGRHDSQSEQSTIS) form a disordered region.

This sequence belongs to the hrmA family.

It is found in the nucleus. Probably modulates the generation of the hypoxia-typic morphotype (called H-MORPH) with altered biofilm architecture that leads to increased host inflammation, rapid disease progression, and mortality in a murine model of invasive aspergillosis. The polypeptide is Hypoxia responsive morphology factor B (Aspergillus fumigatus (strain CBS 144.89 / FGSC A1163 / CEA10) (Neosartorya fumigata)).